Consider the following 346-residue polypeptide: Autoinducer 2 import system permease protein LsrC (346 aa).

The next 9 helical transmembrane spans lie at 13–33 (LLAI…YLSV), 38–58 (MVFS…MVML), 71–91 (GMCA…PVAC), 92–112 (LATL…VAWL), 114–134 (IPAI…MLLW), 154–174 (VFLG…LMAW), 212–232 (LNGG…GFIP), 248–268 (VLGG…ILGA), and 283–303 (IPAW…LVFD).

This sequence belongs to the binding-protein-dependent transport system permease family. AraH/RbsC subfamily. The complex is composed of two ATP-binding proteins (LsrA), two transmembrane proteins (LsrC and LsrD) and a solute-binding protein (LsrB).

It is found in the cell inner membrane. In terms of biological role, part of the ABC transporter complex LsrABCD involved in autoinducer 2 (AI-2) import. Probably responsible for the translocation of the substrate across the membrane. The polypeptide is Autoinducer 2 import system permease protein LsrC (lsrC) (Salmonella paratyphi B (strain ATCC BAA-1250 / SPB7)).